The primary structure comprises 853 residues: DNA mismatch repair protein MutS (853 aa).

614 to 621 lines the ATP pocket; sequence GPNMGGKS.

Belongs to the DNA mismatch repair MutS family.

In terms of biological role, this protein is involved in the repair of mismatches in DNA. It is possible that it carries out the mismatch recognition step. This protein has a weak ATPase activity. In Enterobacter sp. (strain 638), this protein is DNA mismatch repair protein MutS.